Reading from the N-terminus, the 1502-residue chain is Gem-associated protein 5 (1502 aa).

The important for interaction with U1 snRNA stretch occupies residues 1 to 124; sequence MKPEPRTLPP…LHWSPTVKDL (124 aa). Residues 13 to 15 are interaction with U4 snRNA; the sequence is NWY. Position 48 is a phosphoserine (Ser48). WD repeat units lie at residues 62–104, 107–148, 150–189, 193–264, 280–321, 333–374, 377–417, 424–464, 468–509, 533–573, and 576–622; these read GHTE…VVTE, LHQH…QHLF, EPRTIFCLTCSPHHENLVAIGYKDGIVVIIDISKKGEVIH, GHDD…GVMV, TVKE…RRKY, HSRI…CCWT, SLGG…NNYD, GVKS…PPQI, YHKK…VVLQ, RYKL…LLCT, and QHHK…ESNP. Ser624 is subject to Phosphoserine. 2 WD repeats span residues 637 to 677 and 680 to 720; these read GHTA…PLFN and GHRG…HSRP. Disordered stretches follow at residues 740–797 and 819–838; these read KLKK…SPVV and SSKATSLKKEPAKEKPEALL. Lys754 participates in a covalent cross-link: Glycyl lysine isopeptide (Lys-Gly) (interchain with G-Cter in SUMO2). 3 positions are modified to phosphoserine: Ser757, Ser770, and Ser778. The span at 825-838 shows a compositional bias: basic and acidic residues; sequence LKKEPAKEKPEALL. Ser845 carries the phosphoserine modification. 2 disordered regions span residues 1309-1338 and 1378-1427; these read VSDKQSKPEDSASAEDMEQPPGPGPRLSAE and HQKS…SLPE. Residues 1355–1382 adopt a coiled-coil conformation; the sequence is ASLQTSQRTVAEVQETLAEMIRQHQKSQ. A compositionally biased stretch (polar residues) spans 1380–1391; that stretch reads KSQLCKATTNGP. Positions 1392 to 1407 are enriched in basic and acidic residues; it reads SRDEPSRDEPSQEAER.

The protein belongs to the WD repeat gemin-5 family. Part of the core SMN complex that contains SMN1, GEMIN2/SIP1, DDX20/GEMIN3, GEMIN4, GEMIN5, GEMIN6, GEMIN7, GEMIN8 and STRAP/UNRIP. Part of the SMN-Sm complex that contains SMN1, GEMIN2/SIP1, DDX20/GEMIN3, GEMIN4, GEMIN5, GEMIN6, GEMIN7, GEMIN8, STRAP/UNRIP and the Sm proteins SNRPB, SNRPD1, SNRPD2, SNRPD3, SNRPE, SNRPF and SNRPG. Interacts directly with SMN1, SNRPB, SNRPD1, SNRPD2, SNRPD3 and SNRPE. Identified in a SMN complex that contains GEMIN2/SIP1. Interacts with cytosolic DDX20/GEMIN3 and GEMIN4. Interacts with SNRNP70 and HNRNPU. Identified in a complex with 80S ribosomes; binds to the 60S large ribosomal subunit. Interacts with the ribosomal subunits RPL3 and RPL4.

Its subcellular location is the nucleus. It is found in the nucleoplasm. It localises to the gem. The protein localises to the cytoplasm. Functionally, the SMN complex catalyzes the assembly of small nuclear ribonucleoproteins (snRNPs), the building blocks of the spliceosome, and thereby plays an important role in the splicing of cellular pre-mRNAs. Most spliceosomal snRNPs contain a common set of Sm proteins SNRPB, SNRPD1, SNRPD2, SNRPD3, SNRPE, SNRPF and SNRPG that assemble in a heptameric protein ring on the Sm site of the small nuclear RNA to form the core snRNP (Sm core). In the cytosol, the Sm proteins SNRPD1, SNRPD2, SNRPE, SNRPF and SNRPG are trapped in an inactive 6S pICln-Sm complex by the chaperone CLNS1A that controls the assembly of the core snRNP. To assemble core snRNPs, the SMN complex accepts the trapped 5Sm proteins from CLNS1A forming an intermediate. Binding of snRNA inside 5Sm ultimately triggers eviction of the SMN complex, thereby allowing binding of SNRPD3 and SNRPB to complete assembly of the core snRNP. Within the SMN complex, GEMIN5 recognizes and delivers the small nuclear RNAs (snRNAs) to the SMN complex. Binds to the 7-methylguanosine cap of RNA molecules. Binds to the 3'-UTR of SMN1 mRNA and regulates its translation; does not affect mRNA stability. May play a role in the regulation of protein synthesis via its interaction with ribosomes. This is Gem-associated protein 5 (Gemin5) from Mus musculus (Mouse).